A 154-amino-acid chain; its full sequence is Ribosome maturation factor RimP (154 aa).

Belongs to the RimP family.

The protein resides in the cytoplasm. In terms of biological role, required for maturation of 30S ribosomal subunits. This Salmonella agona (strain SL483) protein is Ribosome maturation factor RimP.